A 1336-amino-acid polypeptide reads, in one-letter code: Aldehyde oxidase 4 (1336 aa).

A 2Fe-2S ferredoxin-type domain is found at 8–95 (DELIFFVNGK…GAAITTVEGV (88 aa)). [2Fe-2S] cluster-binding residues include Cys-47, Cys-52, Cys-55, and Cys-77. Position 116 (Gln-116) interacts with Mo-molybdopterin. The [2Fe-2S] cluster site is built by Cys-117, Cys-120, Cys-152, and Cys-154. Cys-154 is a Mo-molybdopterin binding site. The FAD-binding PCMH-type domain maps to 237 to 423 (FQGKRTTWII…LSIFIPYTAQ (187 aa)). Residues 265 to 272 (LVMGNTTV), Ala-346, Thr-355, His-359, Asp-368, and Ile-413 each bind FAD. Mo-molybdopterin contacts are provided by residues 804-805 (AF), Leu-1045, 1086-1089 (GSMG), Gln-1201, and Leu-1265. Residue Glu-1267 is the Proton acceptor; for azaheterocycle hydroxylase activity of the active site.

Belongs to the xanthine dehydrogenase family. In terms of assembly, homodimer. [2Fe-2S] cluster is required as a cofactor. It depends on FAD as a cofactor. Mo-molybdopterin serves as cofactor. As to expression, highly expressed in Harderian glands and sebaceous glands with detectable levels in the epidermis and other keratinized epithelia (at protein level). Detected in testis. The expression is 3 times greater in females than in males.

The protein resides in the cytoplasm. It carries out the reaction an aldehyde + O2 + H2O = a carboxylate + H2O2 + H(+). The catalysed reaction is retinal + O2 + H2O = retinoate + H2O2 + H(+). The enzyme catalyses all-trans-retinal + O2 + H2O = all-trans-retinoate + H2O2 + H(+). Aldehyde oxidase able to catalyze the oxidation of retinaldehyde into retinoate. Is responsible for the major all-trans-retinaldehyde-metabolizing activity in the Harderian gland, and contributes a significant amount of the same activity in the skin. Is devoid of pyridoxal-oxidizing activity, in contrast to the other aldehyde oxidases. Acts as a negative modulator of the epidermal trophism. May be able to oxidize a wide variety of aldehydes into their corresponding carboxylates and to hydroxylate azaheterocycles. This Mus musculus (Mouse) protein is Aldehyde oxidase 4 (Aox4).